Consider the following 464-residue polypeptide: Argininosuccinate lyase (464 aa).

It belongs to the lyase 1 family. Argininosuccinate lyase subfamily.

It localises to the cytoplasm. It carries out the reaction 2-(N(omega)-L-arginino)succinate = fumarate + L-arginine. It participates in amino-acid biosynthesis; L-arginine biosynthesis; L-arginine from L-ornithine and carbamoyl phosphate: step 3/3. This Pseudomonas paraeruginosa (strain DSM 24068 / PA7) (Pseudomonas aeruginosa (strain PA7)) protein is Argininosuccinate lyase.